We begin with the raw amino-acid sequence, 156 residues long: Regulatory protein RecX (156 aa).

Belongs to the RecX family.

The protein resides in the cytoplasm. Modulates RecA activity. In Pseudomonas putida (strain ATCC 47054 / DSM 6125 / CFBP 8728 / NCIMB 11950 / KT2440), this protein is Regulatory protein RecX.